A 201-amino-acid chain; its full sequence is Peptide deformylase (201 aa).

Positions 1-34 (MSLNFAAMARQSERQASTVMVPKGEEQPESPKIH) are disordered. Residues 23 to 32 (KGEEQPESPK) are compositionally biased toward basic and acidic residues. Fe cation contacts are provided by cysteine 121 and histidine 163. Glutamate 164 is an active-site residue. Residue histidine 167 participates in Fe cation binding.

Belongs to the polypeptide deformylase family. Fe(2+) serves as cofactor.

The catalysed reaction is N-terminal N-formyl-L-methionyl-[peptide] + H2O = N-terminal L-methionyl-[peptide] + formate. Functionally, removes the formyl group from the N-terminal Met of newly synthesized proteins. Requires at least a dipeptide for an efficient rate of reaction. N-terminal L-methionine is a prerequisite for activity but the enzyme has broad specificity at other positions. The protein is Peptide deformylase of Synechococcus sp. (strain RCC307).